Here is a 379-residue protein sequence, read N- to C-terminus: Forkhead box protein F1 (379 aa).

A disordered region spans residues 1 to 45; that stretch reads MSSAPEKQQPPHGGGGGGGGGGGAAMDPASSGPSKAKKTNAGIRR. Positions 12-24 are enriched in gly residues; sequence HGGGGGGGGGGGA. The fork-head DNA-binding region spans 47 to 138; that stretch reads EKPPYSYIAL…EFMFEEGSFR (92 aa).

In terms of tissue distribution, expressed in lung and placenta.

The protein localises to the nucleus. Its function is as follows. Probable transcription activator for a number of lung-specific genes. The protein is Forkhead box protein F1 (FOXF1) of Homo sapiens (Human).